A 113-amino-acid polypeptide reads, in one-letter code: Large ribosomal subunit protein bL19 (113 aa).

It belongs to the bacterial ribosomal protein bL19 family.

Functionally, this protein is located at the 30S-50S ribosomal subunit interface and may play a role in the structure and function of the aminoacyl-tRNA binding site. This Rhodococcus erythropolis (strain PR4 / NBRC 100887) protein is Large ribosomal subunit protein bL19.